A 64-amino-acid chain; its full sequence is UPF0434 protein Bcep18194_A5877 (64 aa).

This sequence belongs to the UPF0434 family.

The protein is UPF0434 protein Bcep18194_A5877 of Burkholderia lata (strain ATCC 17760 / DSM 23089 / LMG 22485 / NCIMB 9086 / R18194 / 383).